A 76-amino-acid chain; its full sequence is Sec-independent protein translocase protein TatA (76 aa).

The chain crosses the membrane as a helical span at residues 1 to 21 (MLGGLTGWHLLIILAVILLLF). Positions 44 to 57 (VNEMKKDGDKDKGE) are enriched in basic and acidic residues. The disordered stretch occupies residues 44–76 (VNEMKKDGDKDKGEGGSTAPATDTGASSEQNSK). Polar residues predominate over residues 62–76 (APATDTGASSEQNSK).

Belongs to the TatA/E family. In terms of assembly, the Tat system comprises two distinct complexes: a TatABC complex, containing multiple copies of TatA, TatB and TatC subunits, and a separate TatA complex, containing only TatA subunits. Substrates initially bind to the TatABC complex, which probably triggers association of the separate TatA complex to form the active translocon.

The protein resides in the cell membrane. Its function is as follows. Part of the twin-arginine translocation (Tat) system that transports large folded proteins containing a characteristic twin-arginine motif in their signal peptide across membranes. TatA could form the protein-conducting channel of the Tat system. This is Sec-independent protein translocase protein TatA from Leifsonia xyli subsp. xyli (strain CTCB07).